The chain runs to 473 residues: Aspartyl aminopeptidase 1 (473 aa).

His-93 is a Zn(2+) binding site. Position 168 (His-168) interacts with substrate. 4 residues coordinate Zn(2+): Asp-262, Glu-298, Glu-299, and Asp-343. Position 298 (Glu-298) interacts with substrate. Asp-343, His-346, Lys-371, and Tyr-378 together coordinate substrate. Residue His-437 participates in Zn(2+) binding.

This sequence belongs to the peptidase M18 family. Tetrahedron-shaped homododecamer built from six homodimers. Interacts with autophagy receptor Nbr1. It depends on Zn(2+) as a cofactor.

Its subcellular location is the cytoplasm. The protein resides in the vacuole lumen. The catalysed reaction is Release of an N-terminal aspartate or glutamate from a peptide, with a preference for aspartate.. Functionally, aspartyl aminopeptidase that is able to remove aspartyl residue at N-terminus of angiotensin I. Also acts as a chaperone and efficiently suppressed the thermal aggregation of citrate synthase. The protein is Aspartyl aminopeptidase 1 (ape4) of Schizosaccharomyces pombe (strain 972 / ATCC 24843) (Fission yeast).